A 562-amino-acid chain; its full sequence is NAD-dependent malic enzyme (562 aa).

Tyrosine 101 (proton donor) is an active-site residue. Arginine 154 provides a ligand contact to NAD(+). The active-site Proton acceptor is lysine 172. The a divalent metal cation site is built by glutamate 243, aspartate 244, and aspartate 267. NAD(+)-binding residues include aspartate 267 and asparagine 415.

The protein belongs to the malic enzymes family. In terms of assembly, homotetramer. It depends on Mg(2+) as a cofactor. Requires Mn(2+) as cofactor.

The catalysed reaction is (S)-malate + NAD(+) = pyruvate + CO2 + NADH. It carries out the reaction oxaloacetate + H(+) = pyruvate + CO2. This Aliivibrio salmonicida (strain LFI1238) (Vibrio salmonicida (strain LFI1238)) protein is NAD-dependent malic enzyme.